Reading from the N-terminus, the 419-residue chain is Gamma-glutamyl phosphate reductase (419 aa).

This sequence belongs to the gamma-glutamyl phosphate reductase family.

Its subcellular location is the cytoplasm. The catalysed reaction is L-glutamate 5-semialdehyde + phosphate + NADP(+) = L-glutamyl 5-phosphate + NADPH + H(+). It participates in amino-acid biosynthesis; L-proline biosynthesis; L-glutamate 5-semialdehyde from L-glutamate: step 2/2. Functionally, catalyzes the NADPH-dependent reduction of L-glutamate 5-phosphate into L-glutamate 5-semialdehyde and phosphate. The product spontaneously undergoes cyclization to form 1-pyrroline-5-carboxylate. In Yersinia pseudotuberculosis serotype O:1b (strain IP 31758), this protein is Gamma-glutamyl phosphate reductase.